Consider the following 394-residue polypeptide: Carbamoyltransferase HypF homolog (394 aa).

The protein belongs to the carbamoyltransferase HypF family.

The protein is Carbamoyltransferase HypF homolog (hypF1) of Cupriavidus necator (strain ATCC 17699 / DSM 428 / KCTC 22496 / NCIMB 10442 / H16 / Stanier 337) (Ralstonia eutropha).